Consider the following 439-residue polypeptide: Probable tRNA pseudouridine synthase D (439 aa).

The Nucleophile role is filled by D87. The region spanning 166 to 391 (GVPNFFGIQR…SKGLRREILL (226 aa)) is the TRUD domain.

It belongs to the pseudouridine synthase TruD family.

It carries out the reaction uridine(13) in tRNA = pseudouridine(13) in tRNA. Functionally, could be responsible for synthesis of pseudouridine from uracil-13 in transfer RNAs. The chain is Probable tRNA pseudouridine synthase D from Methanococcoides burtonii (strain DSM 6242 / NBRC 107633 / OCM 468 / ACE-M).